The chain runs to 530 residues: Cilia- and flagella-associated protein 97 (530 aa).

The residue at position 19 (S19) is a Phosphoserine. Disordered regions lie at residues 29–83 and 116–258; these read TNSV…PVEN and IPNR…LSTP. The segment covering 35-49 has biased composition (basic and acidic residues); it reads KQNDDPKERIDKDTK. A compositionally biased stretch (polar residues) spans 50-63; that stretch reads NVNSNTGMQTTENY. The segment covering 67–82 has biased composition (basic and acidic residues); that stretch reads KGNERNVKFPPEHPVE. Positions 129-139 are enriched in acidic residues; sequence GDYYTDGEESS. T133 is subject to Phosphothreonine. S138 and S139 each carry phosphoserine. Residues 170-203 show a composition bias toward low complexity; that stretch reads SSSSSSSLSSSSSGSGTDCLDGGSDSHLSDSSPS. S215 bears the Phosphoserine mark. Residues 227–236 are compositionally biased toward polar residues; sequence TETQPSSTTP. A phosphoserine mark is found at S245 and S327. Residues 372–447 are a coiled coil; it reads KNYSFTREEV…ALLKRLEAVK (76 aa). Disordered regions lie at residues 395 to 417 and 483 to 530; these read LSRQ…HPPK and QYSP…TAWL. Positions 491–501 are enriched in polar residues; that stretch reads SRTSSATSGLS.

This sequence belongs to the CFAP97 family.

The polypeptide is Cilia- and flagella-associated protein 97 (Pongo abelii (Sumatran orangutan)).